A 123-amino-acid chain; its full sequence is Small ribosomal subunit protein uS12 (123 aa).

Position 89 is a 3-methylthioaspartic acid (Asp89).

This sequence belongs to the universal ribosomal protein uS12 family. As to quaternary structure, part of the 30S ribosomal subunit. Contacts proteins S8 and S17. May interact with IF1 in the 30S initiation complex.

Its function is as follows. With S4 and S5 plays an important role in translational accuracy. Functionally, interacts with and stabilizes bases of the 16S rRNA that are involved in tRNA selection in the A site and with the mRNA backbone. Located at the interface of the 30S and 50S subunits, it traverses the body of the 30S subunit contacting proteins on the other side and probably holding the rRNA structure together. The combined cluster of proteins S8, S12 and S17 appears to hold together the shoulder and platform of the 30S subunit. In Orientia tsutsugamushi (strain Boryong) (Rickettsia tsutsugamushi), this protein is Small ribosomal subunit protein uS12.